Reading from the N-terminus, the 177-residue chain is GTP-dependent dephospho-CoA kinase (177 aa).

GTP contacts are provided by Asp-48, Val-49, Val-50, Asp-67, Lys-69, and Glu-124.

It belongs to the GTP-dependent DPCK family.

The catalysed reaction is 3'-dephospho-CoA + GTP = GDP + CoA + H(+). Its pathway is cofactor biosynthesis; coenzyme A biosynthesis. Functionally, catalyzes the GTP-dependent phosphorylation of the 3'-hydroxyl group of dephosphocoenzyme A to form coenzyme A (CoA). In Pyrococcus furiosus (strain ATCC 43587 / DSM 3638 / JCM 8422 / Vc1), this protein is GTP-dependent dephospho-CoA kinase.